The primary structure comprises 447 residues: UDP-N-acetylmuramoylalanine--D-glutamate ligase (447 aa).

130-136 provides a ligand contact to ATP; the sequence is GTSGKTT.

This sequence belongs to the MurCDEF family.

The protein localises to the cytoplasm. It catalyses the reaction UDP-N-acetyl-alpha-D-muramoyl-L-alanine + D-glutamate + ATP = UDP-N-acetyl-alpha-D-muramoyl-L-alanyl-D-glutamate + ADP + phosphate + H(+). It participates in cell wall biogenesis; peptidoglycan biosynthesis. Functionally, cell wall formation. Catalyzes the addition of glutamate to the nucleotide precursor UDP-N-acetylmuramoyl-L-alanine (UMA). This Oleidesulfovibrio alaskensis (strain ATCC BAA-1058 / DSM 17464 / G20) (Desulfovibrio alaskensis) protein is UDP-N-acetylmuramoylalanine--D-glutamate ligase.